Reading from the N-terminus, the 401-residue chain is Serine--glyoxylate aminotransferase (401 aa).

An N-acetylmethionine modification is found at M1. Residues 68–70, T148, and 200–201 contribute to the pyridoxal 5'-phosphate site; these read TGT and QK. Residue K201 participates in 3-hydroxypyruvate binding. At K201 the chain carries N6-(pyridoxal phosphate)lysine. S204 is modified (phosphoserine). A 3-hydroxypyruvate-binding site is contributed by R347. The short motif at 399–401 is the Microbody targeting signal element; the sequence is SRI.

The protein belongs to the class-V pyridoxal-phosphate-dependent aminotransferase family. As to quaternary structure, forms homodimers. Interacts with RABGAP22. Requires pyridoxal 5'-phosphate as cofactor. In terms of tissue distribution, widely expressed. Preferentially expressed in green, leafy tissues, root cortex and epidermis, developing siliques and dry seeds.

It localises to the peroxisome. The enzyme catalyses glyoxylate + L-serine = 3-hydroxypyruvate + glycine. The catalysed reaction is glyoxylate + L-alanine = glycine + pyruvate. It catalyses the reaction L-serine + pyruvate = 3-hydroxypyruvate + L-alanine. It carries out the reaction 3-hydroxypyruvate + L-asparagine = 2-oxosuccinamate + L-serine. The enzyme catalyses L-asparagine + glyoxylate = 2-oxosuccinamate + glycine. The catalysed reaction is L-asparagine + pyruvate = 2-oxosuccinamate + L-alanine. Its activity is regulated as follows. Inhibited by aminooxyacetate and beta-chloro-L-alanine, but not by p-hydroxymercuribenzoate. Photorespiratory enzyme that catalyzes transamination reactions with multiple substrates, including asparagine. Functions exclusively as a catabolic enzyme in Asn metabolism. Involved in root development during seedling establishment after seed germination by regulating serine homeostasis and acetate conversion. This Arabidopsis thaliana (Mouse-ear cress) protein is Serine--glyoxylate aminotransferase.